Here is a 454-residue protein sequence, read N- to C-terminus: Chromosomal replication initiator protein DnaA (454 aa).

The tract at residues 1 to 83 (MTEKEHFFWN…IKVEYVFDEA (83 aa)) is domain I, interacts with DnaA modulators. A domain II region spans residues 83 to 113 (ALVSETKPTLANNDFSNKREQQTPDLPTLNS). The segment at 114 to 332 (DLNSKYTFDN…GALKDISLVA (219 aa)) is domain III, AAA+ region. Glycine 158, glycine 160, lysine 161, and threonine 162 together coordinate ATP. The interval 333-454 (NVRQLDTITV…EIDTIKNKIK (122 aa)) is domain IV, binds dsDNA.

It belongs to the DnaA family. Oligomerizes as a right-handed, spiral filament on DNA at oriC.

Its subcellular location is the cytoplasm. Functionally, plays an essential role in the initiation and regulation of chromosomal replication. ATP-DnaA binds to the origin of replication (oriC) to initiate formation of the DNA replication initiation complex once per cell cycle. Binds the DnaA box (a 9 base pair repeat at the origin) and separates the double-stranded (ds)DNA. Forms a right-handed helical filament on oriC DNA; dsDNA binds to the exterior of the filament while single-stranded (ss)DNA is stabiized in the filament's interior. The ATP-DnaA-oriC complex binds and stabilizes one strand of the AT-rich DNA unwinding element (DUE), permitting loading of DNA polymerase. After initiation quickly degrades to an ADP-DnaA complex that is not apt for DNA replication. Binds acidic phospholipids. This chain is Chromosomal replication initiator protein DnaA, found in Streptococcus thermophilus (strain ATCC BAA-250 / LMG 18311).